Reading from the N-terminus, the 90-residue chain is Beta-microseminoprotein (90 aa).

5 disulfides stabilise this stretch: C2/C16, C34/C70, C37/C46, C39/C47, and C61/C84. Position 90 is a valine amide (V90).

Belongs to the beta-microseminoprotein family.

It is found in the secreted. The sequence is that of Beta-microseminoprotein (MSMB) from Struthio camelus (Common ostrich).